The primary structure comprises 306 residues: Phospho-N-acetylmuramoyl-pentapeptide-transferase (306 aa).

10 consecutive transmembrane segments (helical) span residues 2 to 22 (IALL…LKYW), 47 to 67 (SGTP…FLFF), 71 to 91 (FFIS…DLKL), 105 to 125 (IFLS…DYKI), 131 to 151 (LIID…IAVP), 162 to 182 (GLAG…SFHF), 185 to 205 (IALE…FNSH), 209 to 229 (IFMG…LSVV), 236 to 256 (LIFL…QVFF), and 284 to 304 (IVWR…VLWY).

This sequence belongs to the glycosyltransferase 4 family. MraY subfamily. Mg(2+) serves as cofactor.

It localises to the cell inner membrane. It carries out the reaction UDP-N-acetyl-alpha-D-muramoyl-L-alanyl-gamma-D-glutamyl-meso-2,6-diaminopimeloyl-D-alanyl-D-alanine + di-trans,octa-cis-undecaprenyl phosphate = di-trans,octa-cis-undecaprenyl diphospho-N-acetyl-alpha-D-muramoyl-L-alanyl-D-glutamyl-meso-2,6-diaminopimeloyl-D-alanyl-D-alanine + UMP. It functions in the pathway cell wall biogenesis; peptidoglycan biosynthesis. Functionally, catalyzes the initial step of the lipid cycle reactions in the biosynthesis of the cell wall peptidoglycan: transfers peptidoglycan precursor phospho-MurNAc-pentapeptide from UDP-MurNAc-pentapeptide onto the lipid carrier undecaprenyl phosphate, yielding undecaprenyl-pyrophosphoryl-MurNAc-pentapeptide, known as lipid I. This Dictyoglomus thermophilum (strain ATCC 35947 / DSM 3960 / H-6-12) protein is Phospho-N-acetylmuramoyl-pentapeptide-transferase.